The primary structure comprises 554 residues: Protein PNS1 (554 aa).

2 stretches are compositionally biased toward low complexity: residues 1-19 and 27-45; these read MSGP…NNNN and SYQM…QPQY. Residues 1 to 90 are disordered; the sequence is MSGPQYGAQP…TDGYGGPPPS (90 aa). Over 1–105 the chain is Cytoplasmic; it reads MSGPQYGAQP…KVQKPKYNDW (105 aa). The segment covering 68-90 has biased composition (pro residues); it reads PQGPPPNGSKPPPTDGYGGPPPS. Residues 106–126 form a helical membrane-spanning segment; sequence WAGLLFLATVAGFVAVSAISI. Topologically, residues 127–153 are extracellular; it reads HGYADNRSQNNGSLNGQRNTFGLTTHT. N-linked (GlcNAc...) asparagine glycans are attached at residues asparagine 132 and asparagine 137. A helical transmembrane segment spans residues 154–174; the sequence is IYLFVWVLICAIVLSYAYMWM. The Cytoplasmic segment spans residues 175–181; sequence ARKFTKQ. The chain crosses the membrane as a helical span at residues 182–202; sequence FIYATGILNIVMGLVTALYML. Over 203 to 206 the chain is Extracellular; the sequence is SRKY. The chain crosses the membrane as a helical span at residues 207 to 227; the sequence is WSGGIVFLIFVVLQALFFWSC. Residues 228–255 lie on the Cytoplasmic side of the membrane; that stretch reads RSRIPFSTLMLQTAIDVSKVHGHVYLVS. A helical membrane pass occupies residues 256–276; it reads AVGGVIGTLFAAYWAITLVAV. The Extracellular segment spans residues 277–297; sequence YVKFEPDPNNAACRNAGGCSS. A helical membrane pass occupies residues 298 to 318; the sequence is GKVIGLIVFITFAGYWISEWL. Residues 319-352 lie on the Cytoplasmic side of the membrane; that stretch reads KNTIHTTVAGIYGSWYFNSRNYPTKVTRGALKRS. The helical transmembrane segment at 353–373 threads the bilayer; the sequence is LTYSFGSISLGSLFIAIINLI. The Extracellular portion of the chain corresponds to 374–389; that stretch reads RQLAQAAQQNAAQEGD. The helical transmembrane segment at 390–410 threads the bilayer; the sequence is ILGTILWCIFGCLIGILDWLV. Over 411–451 the chain is Cytoplasmic; it reads EFINRYAFCHIALYGKAYFAAAKDTWKMVKDRGIDALINEC. The helical transmembrane segment at 452–472 threads the bilayer; sequence LIGPVLTFGATFVAYACGLIA. Over 473–487 the chain is Extracellular; sequence YLYMVYTKPAYNDGG. The helical transmembrane segment at 488–508 threads the bilayer; the sequence is GFTPVVVAFAFLIGLQVCNVF. Topologically, residues 509–554 are cytoplasmic; the sequence is TTPLTSGIDTIFVAMAWDPEVLMRDHPDLYHRMVQVYPHVQEAIHA.

It belongs to the CTL (choline transporter-like) family.

Its subcellular location is the cell membrane. Functionally, probably involved in transport through the plasma membrane. This chain is Protein PNS1 (pns-1), found in Neurospora crassa (strain ATCC 24698 / 74-OR23-1A / CBS 708.71 / DSM 1257 / FGSC 987).